The primary structure comprises 325 residues: Acetyl-coenzyme A carboxylase carboxyl transferase subunit alpha (325 aa).

Positions arginine 38–threonine 292 constitute a CoA carboxyltransferase C-terminal domain.

Belongs to the AccA family. Acetyl-CoA carboxylase is a heterohexamer composed of biotin carboxyl carrier protein (AccB), biotin carboxylase (AccC) and two subunits each of ACCase subunit alpha (AccA) and ACCase subunit beta (AccD).

The protein localises to the cytoplasm. The enzyme catalyses N(6)-carboxybiotinyl-L-lysyl-[protein] + acetyl-CoA = N(6)-biotinyl-L-lysyl-[protein] + malonyl-CoA. It participates in lipid metabolism; malonyl-CoA biosynthesis; malonyl-CoA from acetyl-CoA: step 1/1. With respect to regulation, inhibited by pyrrolidine dione antibiotics moiramide B (CPD1) and CPD2. Its function is as follows. Component of the acetyl coenzyme A carboxylase (ACC) complex. First, biotin carboxylase catalyzes the carboxylation of biotin on its carrier protein (BCCP) and then the CO(2) group is transferred by the carboxyltransferase to acetyl-CoA to form malonyl-CoA. The polypeptide is Acetyl-coenzyme A carboxylase carboxyl transferase subunit alpha (Bacillus subtilis (strain 168)).